Consider the following 327-residue polypeptide: Acetyl-coenzyme A carboxylase carboxyl transferase subunit beta (327 aa).

Residues 24-293 form the CoA carboxyltransferase N-terminal domain; that stretch reads LWIKCPDTGQ…LTVTTAVEAP (270 aa). Positions 293 to 311 are enriched in low complexity; sequence PAEAAAKAEPEATTTEQPV. The interval 293–327 is disordered; it reads PAEAAAKAEPEATTTEQPVAPAPTEPPAQPAAPQA. Residues 312 to 327 are compositionally biased toward pro residues; it reads APAPTEPPAQPAAPQA.

It belongs to the AccD/PCCB family. In terms of assembly, acetyl-CoA carboxylase is a heterohexamer composed of biotin carboxyl carrier protein (AccB), biotin carboxylase (AccC) and two subunits each of ACCase subunit alpha (AccA) and ACCase subunit beta (AccD).

The protein localises to the cytoplasm. It catalyses the reaction N(6)-carboxybiotinyl-L-lysyl-[protein] + acetyl-CoA = N(6)-biotinyl-L-lysyl-[protein] + malonyl-CoA. Its pathway is lipid metabolism; malonyl-CoA biosynthesis; malonyl-CoA from acetyl-CoA: step 1/1. Component of the acetyl coenzyme A carboxylase (ACC) complex. Biotin carboxylase (BC) catalyzes the carboxylation of biotin on its carrier protein (BCCP) and then the CO(2) group is transferred by the transcarboxylase to acetyl-CoA to form malonyl-CoA. This Rhodopseudomonas palustris (strain TIE-1) protein is Acetyl-coenzyme A carboxylase carboxyl transferase subunit beta.